The primary structure comprises 422 residues: Tyrosine--tRNA ligase (422 aa).

Tyrosine 34 contributes to the L-tyrosine binding site. The short motif at 39–48 (PTEDSLHVGH) is the 'HIGH' region element. Tyrosine 172 and glutamine 176 together coordinate L-tyrosine. The 'KMSKS' region signature appears at 232–236 (KFGKT). Residue lysine 235 participates in ATP binding. Residues 354 to 412 (KDLQEALVLSSLAQSRTQAKNMIISNSISINTKKIVNKNYIIDDNDKLFNQFTLLSRGK) form the S4 RNA-binding domain.

The protein belongs to the class-I aminoacyl-tRNA synthetase family. TyrS type 1 subfamily. In terms of assembly, homodimer.

It is found in the cytoplasm. It carries out the reaction tRNA(Tyr) + L-tyrosine + ATP = L-tyrosyl-tRNA(Tyr) + AMP + diphosphate + H(+). In terms of biological role, catalyzes the attachment of tyrosine to tRNA(Tyr) in a two-step reaction: tyrosine is first activated by ATP to form Tyr-AMP and then transferred to the acceptor end of tRNA(Tyr). The chain is Tyrosine--tRNA ligase from Buchnera aphidicola subsp. Schizaphis graminum (strain Sg).